Reading from the N-terminus, the 587-residue chain is Integrator complex subunit 14 (587 aa).

The 111-residue stretch at 3-113 (TLIALDASLS…NILQVVVFTD (111 aa)) folds into the VWFA domain. Disordered regions lie at residues 190-211 (KSSD…KSEL) and 304-331 (REKS…DTSN).

It belongs to the Integrator subunit 14 family. Belongs to the multiprotein complex Integrator, at least composed of IntS1, IntS2, IntS3, IntS4, omd/IntS5, IntS6, defl/IntS7, IntS8, IntS9, IntS10, IntS11, IntS12, asun/IntS13, IntS14 and IntS15. The core complex associates with protein phosphatase 2A subunits mts/PP2A and Pp2A-29B, to form the Integrator-PP2A (INTAC) complex.

The protein resides in the nucleus. Functionally, component of the integrator complex, a multiprotein complex that terminates RNA polymerase II (Pol II) transcription in the promoter-proximal region of genes. The integrator complex provides a quality checkpoint during transcription elongation by driving premature transcription termination of transcripts that are unfavorably configured for transcriptional elongation: the complex terminates transcription by (1) catalyzing dephosphorylation of the C-terminal domain (CTD) of Pol II subunit Polr2A/Rbp1 and Spt5, and (2) degrading the exiting nascent RNA transcript via endonuclease activity. The integrator complex is also involved in the 3'-end processing of the U7 snRNA, and also the spliceosomal snRNAs U1, U2, U4 and U5. The sequence is that of Integrator complex subunit 14 from Drosophila melanogaster (Fruit fly).